The sequence spans 54 residues: Secreted virulence factor MC69 (54 aa).

The first 18 residues, 1-18 (MKFTLALLTTLCASLASA), serve as a signal peptide directing secretion. A disulfide bridge connects residues cysteine 38 and cysteine 48.

The protein belongs to the MC69 virulence factor family.

Its subcellular location is the secreted. In terms of biological role, secreted protein required for appressorial penetration of intact host epidermal cells and for pathogenicity. This is Secreted virulence factor MC69 from Colletotrichum orbiculare (strain 104-T / ATCC 96160 / CBS 514.97 / LARS 414 / MAFF 240422) (Cucumber anthracnose fungus).